Consider the following 516-residue polypeptide: 2-isopropylmalate synthase (516 aa).

The region spanning 8 to 270 is the Pyruvate carboxyltransferase domain; the sequence is IYIFDTTLRD…YTGIKTESIY (263 aa). Mn(2+) is bound by residues Asp-17, His-205, His-207, and Asn-241. Positions 394–516 are regulatory domain; sequence KLIYLNVVSG…DAGKIKSEYE (123 aa).

The protein belongs to the alpha-IPM synthase/homocitrate synthase family. LeuA type 1 subfamily. In terms of assembly, homodimer. The cofactor is Mn(2+).

The protein localises to the cytoplasm. The enzyme catalyses 3-methyl-2-oxobutanoate + acetyl-CoA + H2O = (2S)-2-isopropylmalate + CoA + H(+). Its pathway is amino-acid biosynthesis; L-leucine biosynthesis; L-leucine from 3-methyl-2-oxobutanoate: step 1/4. In terms of biological role, catalyzes the condensation of the acetyl group of acetyl-CoA with 3-methyl-2-oxobutanoate (2-ketoisovalerate) to form 3-carboxy-3-hydroxy-4-methylpentanoate (2-isopropylmalate). This is 2-isopropylmalate synthase from Syntrophus aciditrophicus (strain SB).